The chain runs to 860 residues: Probable inorganic carbon transporter subunit DabA (860 aa).

The tract at residues 1-32 (MTTTSLGADAAHTHAMVPSAIPPEGSDAAGPD) is disordered. Residues C369, D371, H551, and C566 each contribute to the Zn(2+) site.

It belongs to the inorganic carbon transporter (TC 9.A.2) DabA family. As to quaternary structure, forms a complex with DabB. The cofactor is Zn(2+).

It localises to the cell inner membrane. Functionally, part of an energy-coupled inorganic carbon pump. This Ralstonia pickettii (strain 12D) protein is Probable inorganic carbon transporter subunit DabA.